The following is a 329-amino-acid chain: Aspartate carbamoyltransferase catalytic subunit (329 aa).

Carbamoyl phosphate-binding residues include R66 and T67. K94 provides a ligand contact to L-aspartate. R116, H149, and Q152 together coordinate carbamoyl phosphate. Positions 189 and 243 each coordinate L-aspartate. Carbamoyl phosphate is bound by residues G284 and P285.

The protein belongs to the aspartate/ornithine carbamoyltransferase superfamily. ATCase family. In terms of assembly, heterododecamer (2C3:3R2) of six catalytic PyrB chains organized as two trimers (C3), and six regulatory PyrI chains organized as three dimers (R2).

It carries out the reaction carbamoyl phosphate + L-aspartate = N-carbamoyl-L-aspartate + phosphate + H(+). It participates in pyrimidine metabolism; UMP biosynthesis via de novo pathway; (S)-dihydroorotate from bicarbonate: step 2/3. In terms of biological role, catalyzes the condensation of carbamoyl phosphate and aspartate to form carbamoyl aspartate and inorganic phosphate, the committed step in the de novo pyrimidine nucleotide biosynthesis pathway. The protein is Aspartate carbamoyltransferase catalytic subunit of Gloeobacter violaceus (strain ATCC 29082 / PCC 7421).